Consider the following 410-residue polypeptide: Dipeptidase 1 (410 aa).

Positions 1–16 (MVIIWWFWSLLAICAS) are cleaved as a signal peptide. Residues histidine 36 and aspartate 38 each contribute to the Zn(2+) site. Residues cysteine 87 and cysteine 170 are joined by a disulfide bond. A glycan (N-linked (GlcNAc...) asparagine) is linked at asparagine 121. Glutamate 141 provides a ligand contact to Zn(2+). Position 168 (histidine 168) interacts with substrate. Histidine 214 and histidine 235 together coordinate Zn(2+). A disulfide bond links cysteine 242 and cysteine 274. Arginine 246 provides a ligand contact to substrate. The N-linked (GlcNAc...) asparagine glycan is linked to asparagine 258. A substrate-binding site is contributed by aspartate 304. Asparagine 332 is a glycosylation site (N-linked (GlcNAc...) asparagine). Serine 384 carries the GPI-anchor amidated serine lipid modification. A propeptide spans 385–410 (QAHSIHLQTGALVASLASLLFRLHLL) (removed in mature form).

Belongs to the metallo-dependent hydrolases superfamily. Peptidase M19 family. As to quaternary structure, homodimer; disulfide-linked. It depends on Zn(2+) as a cofactor. Expressed in heart, lung, skeletal muscle, kidney, liver, and testis. Not detected in brain and spleen.

It is found in the apical cell membrane. The protein localises to the cell projection. It localises to the microvillus membrane. It carries out the reaction an L-aminoacyl-L-amino acid + H2O = 2 an L-alpha-amino acid. The enzyme catalyses leukotriene D4 + H2O = leukotriene E4 + glycine. It catalyses the reaction L-cystine-bis-glycine + 2 H2O = L-cystine + 2 glycine. The catalysed reaction is a beta-lactam + H2O = a substituted beta-amino acid. It carries out the reaction glycyldehydrophenylalanine + H2O = 2,3-didehydrophenylalanine + glycine. Its activity is regulated as follows. Inhibited by L-penicillamine. Inhibited by cilastatin. Functionally, hydrolyzes a wide range of dipeptides including the conversion of leukotriene D4 to leukotriene E4. Hydrolyzes cystinyl-bis-glycine (cys-bis-gly) formed during glutathione degradation. Also possesses beta lactamase activity and hydrolytically inactivates beta-lactam antibiotics. In terms of biological role, independently of its dipeptidase activity, acts as an adhesion receptor for neutrophil recruitment from bloodstream into inflamed lungs and liver. The protein is Dipeptidase 1 (Dpep1) of Mus musculus (Mouse).